We begin with the raw amino-acid sequence, 325 residues long: MSFEQIKKVSVVIPIYNEEESLPLLLERTLAACKQLTQEYELILVDDGSSDKSAEILIQAAEQPENHIIAILLNRNYGQHSAIMAGFNQVNGDLIITLDADLQNPPEEIPRLVKTAEQGYDVVGTRRANRQDSLFRKTASKIINAMITKATGRSMGDYGCMLRAYRRHIVEAMLQCHERSTFIPILANTFARKTIEIDVAHAEREFGDSKYSFMKLINLMYDLLTCLTTAPLRLLSVVGSVIAVSGFLLAVLLMVLRLIFGAIWAAEGVFTLFALLFIFIGAQFVAMGLLGEYIGRIYNDVRARPRYFIQKVVGDNKTNDNQEEY.

2 helical membrane passes run 235–255 (LSVVGSVIAVSGFLLAVLLMV) and 269–291 (VFTLFALLFIFIGAQFVAMGLLG).

It belongs to the glycosyltransferase 2 family.

Its subcellular location is the cell inner membrane. It carries out the reaction UDP-4-deoxy-4-formamido-beta-L-arabinose + di-trans,octa-cis-undecaprenyl phosphate = 4-deoxy-4-formamido-alpha-L-arabinopyranosyl di-trans,octa-cis-undecaprenyl phosphate + UDP. Its pathway is glycolipid biosynthesis; 4-amino-4-deoxy-alpha-L-arabinose undecaprenyl phosphate biosynthesis; 4-amino-4-deoxy-alpha-L-arabinose undecaprenyl phosphate from UDP-4-deoxy-4-formamido-beta-L-arabinose and undecaprenyl phosphate: step 1/2. It participates in bacterial outer membrane biogenesis; lipopolysaccharide biosynthesis. In terms of biological role, catalyzes the transfer of 4-deoxy-4-formamido-L-arabinose from UDP to undecaprenyl phosphate. The modified arabinose is attached to lipid A and is required for resistance to polymyxin and cationic antimicrobial peptides. Essential for virulence in insects. The sequence is that of Undecaprenyl-phosphate 4-deoxy-4-formamido-L-arabinose transferase from Photorhabdus laumondii subsp. laumondii (strain DSM 15139 / CIP 105565 / TT01) (Photorhabdus luminescens subsp. laumondii).